Reading from the N-terminus, the 371-residue chain is Maltose/maltodextrin import ATP-binding protein MalK (371 aa).

Residues 4–234 form the ABC transporter domain; the sequence is VQLQNVTKAW…PADRFVAGFI (231 aa). Residue 36–43 participates in ATP binding; the sequence is GPSGCGKS.

The protein belongs to the ABC transporter superfamily. Maltooligosaccharide importer (TC 3.A.1.1.1) family. In terms of assembly, the complex is composed of two ATP-binding proteins (MalK), two transmembrane proteins (MalG and MalK) and a solute-binding protein (MalE).

The protein resides in the cell inner membrane. It carries out the reaction D-maltose(out) + ATP + H2O = D-maltose(in) + ADP + phosphate + H(+). Functionally, part of the ABC transporter complex MalEFGK involved in maltose/maltodextrin import. Responsible for energy coupling to the transport system. The polypeptide is Maltose/maltodextrin import ATP-binding protein MalK (Escherichia coli O6:K15:H31 (strain 536 / UPEC)).